The primary structure comprises 350 residues: Divinyl chlorophyll a/b light-harvesting protein PcbB (350 aa).

Transmembrane regions (helical) follow at residues 27–47 (FLAA…SFTL), 89–109 (IVVT…GGLM), 141–161 (FILG…VEWA), 202–222 (VMGG…WHIV), 244–264 (LSWA…WCAS), and 305–325 (LTNI…WHAL).

It belongs to the PsbB/PsbC family. IsiA/Pcb subfamily. In terms of assembly, the antenna complex consists of divinyl chlorophylls (a and b) and divinyl chlorophyll a/b binding proteins. Under iron-starvation forms a complex with PSI, consisting of a PSI trimer surrounded by a ring composed of 18 PcbB subunits. Requires divinyl chlorophyll a as cofactor. Divinyl chlorophyll b serves as cofactor.

It localises to the cellular thylakoid membrane. In terms of biological role, the antenna complex functions as a light receptor, it captures and delivers excitation energy to photosystems I. The Prochlorales pcb genes are not related to higher plant LHCs. This chain is Divinyl chlorophyll a/b light-harvesting protein PcbB (pcbB), found in Prochlorococcus marinus (strain MIT 9313).